Here is an 878-residue protein sequence, read N- to C-terminus: Pyruvate dehydrogenase phosphatase regulatory subunit, mitochondrial (878 aa).

The transit peptide at 1–93 (MLYRLLSIVQ…CAGILSTARH (93 aa)) directs the protein to the mitochondrion.

This sequence belongs to the GcvT family. In terms of assembly, heterodimer of a catalytic (PDP1) and a regulatory (PDPR) subunit.

Its subcellular location is the mitochondrion matrix. Decreases the sensitivity of PDP1 to magnesium ions, and this inhibition is reversed by the polyamine spermine. This Mus musculus (Mouse) protein is Pyruvate dehydrogenase phosphatase regulatory subunit, mitochondrial (Pdpr).